The following is an 853-amino-acid chain: DNA mismatch repair protein MutS (853 aa).

Gly-614–Ser-621 serves as a coordination point for ATP.

Belongs to the DNA mismatch repair MutS family.

Functionally, this protein is involved in the repair of mismatches in DNA. It is possible that it carries out the mismatch recognition step. This protein has a weak ATPase activity. The protein is DNA mismatch repair protein MutS of Escherichia coli O127:H6 (strain E2348/69 / EPEC).